Consider the following 357-residue polypeptide: 3-isopropylmalate dehydrogenase (357 aa).

76 to 89 (GPQWDTIDPALRPE) serves as a coordination point for NAD(+). Residues arginine 96, arginine 106, arginine 134, and aspartate 224 each coordinate substrate. Mg(2+)-binding residues include aspartate 224, aspartate 248, and aspartate 252. 282 to 294 (GSAPDIAGKGIAN) contacts NAD(+).

It belongs to the isocitrate and isopropylmalate dehydrogenases family. LeuB type 1 subfamily. As to quaternary structure, homodimer. The cofactor is Mg(2+). Mn(2+) serves as cofactor.

It localises to the cytoplasm. The enzyme catalyses (2R,3S)-3-isopropylmalate + NAD(+) = 4-methyl-2-oxopentanoate + CO2 + NADH. The protein operates within amino-acid biosynthesis; L-leucine biosynthesis; L-leucine from 3-methyl-2-oxobutanoate: step 3/4. Its function is as follows. Catalyzes the oxidation of 3-carboxy-2-hydroxy-4-methylpentanoate (3-isopropylmalate) to 3-carboxy-4-methyl-2-oxopentanoate. The product decarboxylates to 4-methyl-2 oxopentanoate. The sequence is that of 3-isopropylmalate dehydrogenase from Xanthomonas axonopodis pv. citri (strain 306).